A 1581-amino-acid chain; its full sequence is Laminin subunit gamma-3 (1581 aa).

The signal sequence occupies residues 1–28 (MAVSRVLSLLATVASMALVIQETHFAAG). The Laminin N-terminal domain maps to 40–279 (RAQRCLPEFE…AVSDFSVGGR (240 aa)). N128 carries an N-linked (GlcNAc...) asparagine glycan. Cystine bridges form between C280/C289, C282/C299, C301/C310, C313/C333, C336/C345, C338/C361, C364/C373, C376/C389, C392/C404, C394/C410, C412/C421, C424/C436, C439/C450, C441/C457, C459/C468, and C471/C486. Laminin EGF-like domains follow at residues 280–335 (CKCN…ECLP), 336–391 (CNCS…PCQP), 392–438 (CDCH…GCRP), and 439–488 (CACN…GCSS). Residue N304 is glycosylated (N-linked (GlcNAc...) asparagine). N-linked (GlcNAc...) asparagine glycosylation occurs at N337. The Laminin EGF-like 5; first part domain maps to 489–498 (CFCYGHSKVC). A Laminin IV type A domain is found at 508 to 684 (HIRSDFRHGA…LAPPASWVET (177 aa)). N640 carries an N-linked (GlcNAc...) asparagine glycan. Positions 685–718 (CLCPQGYTGQFCEFCALGYKREIPHGGPYANCIP) constitute a Laminin EGF-like 5; second part domain. 24 cysteine pairs are disulfide-bonded: C719–C727, C721–C734, C736–C745, C748–C764, C767–C775, C769–C786, C789–C798, C801–C819, C822–C836, C824–C843, C846–C855, C858–C875, C878–C891, C880–C898, C900–C909, C912–C925, C928–C940, C930–C947, C949–C958, C961–C973, C976–C988, C978–C994, C996–C1005, and C1008–C1021. Laminin EGF-like domains lie at 719–766 (CTCN…DCQP), 767–821 (CPCP…PCRR), 822–877 (CQCS…KCAP), 878–927 (CSCD…GCQS), 928–975 (CKCH…GCRD), and 976–1024 (CRCS…CQEC). An N-linked (GlcNAc...) asparagine glycan is attached at N849. N-linked (GlcNAc...) asparagine glycosylation is present at N991. Residues 1025–1581 (PTCYALVKEE…LSSLPENCAS (557 aa)) form a domain II and I region. 2 coiled-coil regions span residues 1029 to 1046 (ALVK…MLME) and 1112 to 1153 (VHCA…LASL). Residues N1162 and N1196 are each glycosylated (N-linked (GlcNAc...) asparagine). The stretch at 1208-1231 (RVASEAQQELEDRYQEVQAAQTAL) forms a coiled coil. An N-linked (GlcNAc...) asparagine glycan is attached at N1320. A disordered region spans residues 1382-1413 (KRKTKQAERMLGNAASLSSSTKKKSKEAELMS). Coiled coils occupy residues 1438-1468 (ASQT…AKQV) and 1510-1575 (AQTL…LSSL). N1514 carries an N-linked (GlcNAc...) asparagine glycan.

In terms of assembly, laminin is a complex glycoprotein, consisting of three different polypeptide chains (alpha, beta, gamma), which are bound to each other by disulfide bonds into a cross-shaped molecule comprising one long and three short arms with globules at each end. Gamma-3 is a subunit of laminin-12 (laminin-213), laminin-14 (laminin-423) and laminin-15 (laminin-523). Strongly expressed in capillaries and arterioles of kidney as well as in interstitial Leydig cells of testis.

Its subcellular location is the secreted. It localises to the extracellular space. The protein localises to the extracellular matrix. It is found in the basement membrane. Functionally, binding to cells via a high affinity receptor, laminin is thought to mediate the attachment, migration and organization of cells into tissues during embryonic development by interacting with other extracellular matrix components. The sequence is that of Laminin subunit gamma-3 (Lamc3) from Mus musculus (Mouse).